The primary structure comprises 468 residues: 6-phospho-beta-galactosidase 2 (468 aa).

D-galactose 6-phosphate-binding residues include glutamine 19, histidine 116, asparagine 159, glutamate 160, and asparagine 297. Glutamate 160 functions as the Proton donor in the catalytic mechanism. The active-site Nucleophile is glutamate 375. Serine 428, tryptophan 429, lysine 435, and tyrosine 437 together coordinate D-galactose 6-phosphate.

It belongs to the glycosyl hydrolase 1 family.

It carries out the reaction a 6-phospho-beta-D-galactoside + H2O = D-galactose 6-phosphate + an alcohol. It participates in carbohydrate metabolism; lactose degradation; D-galactose 6-phosphate and beta-D-glucose from lactose 6-phosphate: step 1/1. The chain is 6-phospho-beta-galactosidase 2 from Streptococcus pneumoniae (strain ATCC BAA-255 / R6).